We begin with the raw amino-acid sequence, 262 residues long: MFVKAKKSLGQNFLIDREVLEKIVSITDITNKEVLEIGPGSGNLTTYILKKKPKKLYVVEKDDDLAILLKEKFDTEIKIINDDILKVSESTISDQKLSVFGNLPYNISTEILSKWILNIGSNFWFDSLVLMFQKEVADRIISEFNNSNYGRLSILSSWKLNVKKILDIKPQSFSPRPKIDSSLLLFTPKENFFKLKDPKNLEKITRIFFSQRRKMLKKPFNQVFDNGKEVAEKFGIDLNLRPQNLEPDVYFKLVKEYEDLRG.

S-adenosyl-L-methionine-binding residues include asparagine 12, leucine 14, glycine 38, glutamate 60, aspartate 83, and asparagine 102.

This sequence belongs to the class I-like SAM-binding methyltransferase superfamily. rRNA adenine N(6)-methyltransferase family. RsmA subfamily.

The protein localises to the cytoplasm. It carries out the reaction adenosine(1518)/adenosine(1519) in 16S rRNA + 4 S-adenosyl-L-methionine = N(6)-dimethyladenosine(1518)/N(6)-dimethyladenosine(1519) in 16S rRNA + 4 S-adenosyl-L-homocysteine + 4 H(+). In terms of biological role, specifically dimethylates two adjacent adenosines (A1518 and A1519) in the loop of a conserved hairpin near the 3'-end of 16S rRNA in the 30S particle. May play a critical role in biogenesis of 30S subunits. This chain is Ribosomal RNA small subunit methyltransferase A, found in Pelagibacter ubique (strain HTCC1062).